We begin with the raw amino-acid sequence, 375 residues long: Homoserine O-succinyltransferase (375 aa).

Positions 48-358 (NAVLVCHALS…PAGHDSFLLD (311 aa)) constitute an AB hydrolase-1 domain. Ser154 serves as the catalytic Nucleophile. Residue Arg224 participates in substrate binding. Catalysis depends on residues Asp319 and His352. Asp353 contributes to the substrate binding site.

This sequence belongs to the AB hydrolase superfamily. MetX family. As to quaternary structure, homodimer.

It is found in the cytoplasm. The enzyme catalyses L-homoserine + succinyl-CoA = O-succinyl-L-homoserine + CoA. Its pathway is amino-acid biosynthesis; L-methionine biosynthesis via de novo pathway; O-succinyl-L-homoserine from L-homoserine: step 1/1. Its function is as follows. Transfers a succinyl group from succinyl-CoA to L-homoserine, forming succinyl-L-homoserine. In Azoarcus sp. (strain BH72), this protein is Homoserine O-succinyltransferase.